Consider the following 491-residue polypeptide: MTTWDKCLKKIKKNLSTFEYKTWIKPIHVEQNSNLFTVYCNNEYFKKHIKSKYGNLILSTIQECHGNDLIIEYSNKKFSGEKITEVITAGPQANFFSTTSVEIKDESEDTKVVQEPKISKKSNSKDFSSSQELFGFDEAMLITAKEDEEYSFGLPLKEKYVFDSFVVGDANKIARAAAMQVSINPGKLHNPLFIYGGSGLGKTHLMQAIGNHAREVNPNAKIIYTNSEQFIKDYVNSIRLQDQDEFQRVYRSADILLIDDIQFIAGKEGTAQEFFHTFNALYENGKQIILTSDKYPNEIEGLEERLVSRFGYGLTVSVDMPDLETRIAILLKKAHDLGQKLPNETAAFIAENVRTNVRELEGALNRVLTTSKFNHKDPTIEVAQACLRDVIKIQEKKVKIDNIQKVVADFYRIRVKDLTSNQRSRNIARPRQIAMSLARELTSHSLPEIGNAFGGRDHTTVMHAVKAITKLRQSNTSISDDYELLLDKISR.

The domain I, interacts with DnaA modulators stretch occupies residues 1–69 (MTTWDKCLKK…TIQECHGNDL (69 aa)). Residues 69–154 (LIIEYSNKKF…KEDEEYSFGL (86 aa)) form a domain II region. Positions 155-371 (PLKEKYVFDS…GALNRVLTTS (217 aa)) are domain III, AAA+ region. 4 residues coordinate ATP: glycine 199, glycine 201, lysine 202, and threonine 203. The tract at residues 372-491 (KFNHKDPTIE…YELLLDKISR (120 aa)) is domain IV, binds dsDNA.

It belongs to the DnaA family. Oligomerizes as a right-handed, spiral filament on DNA at oriC.

It is found in the cytoplasm. Functionally, plays an essential role in the initiation and regulation of chromosomal replication. ATP-DnaA binds to the origin of replication (oriC) to initiate formation of the DNA replication initiation complex once per cell cycle. Binds the DnaA box (a 9 base pair repeat at the origin) and separates the double-stranded (ds)DNA. Forms a right-handed helical filament on oriC DNA; dsDNA binds to the exterior of the filament while single-stranded (ss)DNA is stabiized in the filament's interior. The ATP-DnaA-oriC complex binds and stabilizes one strand of the AT-rich DNA unwinding element (DUE), permitting loading of DNA polymerase. After initiation quickly degrades to an ADP-DnaA complex that is not apt for DNA replication. Binds acidic phospholipids. In Francisella tularensis subsp. holarctica (strain FTNF002-00 / FTA), this protein is Chromosomal replication initiator protein DnaA.